Here is a 396-residue protein sequence, read N- to C-terminus: MTTLLIDNIGSLVTNDPTLDAGPLGVLRDAAVVVEDGRIAWYGATSAAPAADTRLDAAGRAVIPGFVDSHAHLVFAGDRSEEFAARMSGTPYQAGGIRTTVTATRDATDATLKSTVTRLAAEALRSGTTTLECKSGYGLTVEQELRSLQVAAEITDEVTFMGAHVVPPEYAETPDDYVELVCTAMLDACAPAAKWVDVFCERGAFDLDQSRAILQAGIARGLQPRVHANQLGPGPGVQLAVECNAASADHVTHVSDADIAALAGSNTVATLLPAAEFSTRAAYPDGRRLIDAGVTVALSPDCNPGSSFTTNMPFCIAVAVREMHLTPDEAVWAATAGGARALRRDDVGHLAVGARADLALLDAPSHIHLAYRPGVPLVAAVLRNGEIVWQTKEVTS.

The Fe(3+) site is built by His-70 and His-72. Zn(2+)-binding residues include His-70 and His-72. Positions 79, 137, and 164 each coordinate 4-imidazolone-5-propanoate. Residue Tyr-137 participates in N-formimidoyl-L-glutamate binding. His-227 contributes to the Fe(3+) binding site. Zn(2+) is bound at residue His-227. Gln-230 is a binding site for 4-imidazolone-5-propanoate. Asp-301 lines the Fe(3+) pocket. Asp-301 serves as a coordination point for Zn(2+). Positions 303 and 305 each coordinate N-formimidoyl-L-glutamate. Residue Ser-306 participates in 4-imidazolone-5-propanoate binding.

This sequence belongs to the metallo-dependent hydrolases superfamily. HutI family. It depends on Zn(2+) as a cofactor. Fe(3+) is required as a cofactor.

It localises to the cytoplasm. It catalyses the reaction 4-imidazolone-5-propanoate + H2O = N-formimidoyl-L-glutamate. The protein operates within amino-acid degradation; L-histidine degradation into L-glutamate; N-formimidoyl-L-glutamate from L-histidine: step 3/3. Its function is as follows. Catalyzes the hydrolytic cleavage of the carbon-nitrogen bond in imidazolone-5-propanoate to yield N-formimidoyl-L-glutamate. It is the third step in the universal histidine degradation pathway. The sequence is that of Imidazolonepropionase from Mycolicibacterium smegmatis (strain ATCC 700084 / mc(2)155) (Mycobacterium smegmatis).